Reading from the N-terminus, the 396-residue chain is Elongation factor Tu (396 aa).

One can recognise a tr-type G domain in the interval 10–206 (KPHLNIGTIG…AVDENVPDPV (197 aa)). Residues 19-26 (GHVDHGKT) form a G1 region. 19-26 (GHVDHGKT) is a GTP binding site. Mg(2+) is bound at residue Thr26. The segment at 62 to 66 (GITIN) is G2. Residues 83-86 (DAPG) form a G3 region. Residues 83–87 (DAPGH) and 138–141 (NKSD) each bind GTP. The G4 stretch occupies residues 138–141 (NKSD). The segment at 176–178 (SAL) is G5.

The protein belongs to the TRAFAC class translation factor GTPase superfamily. Classic translation factor GTPase family. EF-Tu/EF-1A subfamily. In terms of assembly, monomer.

Its subcellular location is the cytoplasm. It carries out the reaction GTP + H2O = GDP + phosphate + H(+). In terms of biological role, GTP hydrolase that promotes the GTP-dependent binding of aminoacyl-tRNA to the A-site of ribosomes during protein biosynthesis. The protein is Elongation factor Tu of Kocuria rhizophila (strain ATCC 9341 / DSM 348 / NBRC 103217 / DC2201).